A 122-amino-acid chain; its full sequence is MIGVDIVKNERIKDALERFGDKFLDRIYTKRELEYCYAHCDFLPCLAARWAGKEAVLKAFYTEFKIFLRFKEIEILGNRGRPPTVVINREGVEEILKNYEVIVSLSHERDYSVAVAYIKKKS.

Mg(2+)-binding residues include Asp-5 and Glu-54.

This sequence belongs to the P-Pant transferase superfamily. AcpS family. Mg(2+) serves as cofactor.

The protein resides in the cytoplasm. The catalysed reaction is apo-[ACP] + CoA = holo-[ACP] + adenosine 3',5'-bisphosphate + H(+). In terms of biological role, transfers the 4'-phosphopantetheine moiety from coenzyme A to a Ser of acyl-carrier-protein. In Aquifex aeolicus (strain VF5), this protein is Holo-[acyl-carrier-protein] synthase.